The chain runs to 504 residues: UDP-glycosyltransferase UGT4 (504 aa).

Positions 1–23 (MTLLRDLLLLYINSLLFINPSIG) are cleaved as a signal peptide. The Lumenal segment spans residues 24–474 (ENILVFLPTK…SAVIDLYWFQ (451 aa)). Residues N54, N66, N69, and N422 are each glycosylated (N-linked (GlcNAc...) asparagine). The chain crosses the membrane as a helical span at residues 475–495 (YILLDIILFYSLIVLILLCIL). Over 496–504 (RIFFRMLTK) the chain is Cytoplasmic.

This sequence belongs to the UDP-glycosyltransferase family.

The protein localises to the microsome membrane. Catalyzes the transfer of a glycosyl group from a UDP-sugar to an acceptor molecule. The protein is UDP-glycosyltransferase UGT4 of Dactylopius coccus (Cochineal).